The following is a 512-amino-acid chain: ATP synthase subunit alpha 2 (512 aa).

Residue 169–176 coordinates ATP; that stretch reads GDRQTGKT.

It belongs to the ATPase alpha/beta chains family. As to quaternary structure, F-type ATPases have 2 components, CF(1) - the catalytic core - and CF(0) - the membrane proton channel. CF(1) has five subunits: alpha(3), beta(3), gamma(1), delta(1), epsilon(1). CF(0) has three main subunits: a(1), b(2) and c(9-12). The alpha and beta chains form an alternating ring which encloses part of the gamma chain. CF(1) is attached to CF(0) by a central stalk formed by the gamma and epsilon chains, while a peripheral stalk is formed by the delta and b chains.

It is found in the cell inner membrane. The catalysed reaction is ATP + H2O + 4 H(+)(in) = ADP + phosphate + 5 H(+)(out). Produces ATP from ADP in the presence of a proton gradient across the membrane. The alpha chain is a regulatory subunit. The sequence is that of ATP synthase subunit alpha 2 from Vibrio campbellii (strain ATCC BAA-1116).